We begin with the raw amino-acid sequence, 425 residues long: MGGELVTGLGALRRRKRLLEQEKRVAGWALVLAGTGIGLMVLHAEMLWFLGCKWVLYLLLVKCLITLSTAFLLCLIVVFHAKEVQLFMTDNGLRDWRVALTRRQVAQILLELLVCGVHPVPLRSPHCTLAGEATDSQAWPGFLGEGEALLSLAMLLRLYLVPRAVLLRSGVLLNASYRSIGALNQVRFRHWFVAKLYMNTHPGRLLLGLTLGLWLTTAWVLSVAERQAVNATGHLTDTLWLIPITFLTIGYGDVVPGTLWGKIVCLCTGVMGVCCTALLVAVVARKLEFNKAEKHVHNFMMDIHYAKEMKESAARLLQEAWMYYKHTRRKDSRAARRHQRKMLAAIHTFRQVRLKHRKLREQVNSMVDISKMHMILCDLQLGLSASHLALEKRIDGLAGKLDALTELLSTALQQQQPPEPIQEAT.

The helical transmembrane segment at leucine 30–leucine 50 threads the bilayer. A helical membrane pass occupies residues leucine 59–phenylalanine 79. Residues valine 105 to proline 121 traverse the membrane as a helical segment. A helical membrane pass occupies residues glycine 141 to valine 161. The helical transmembrane segment at leucine 205–glutamate 225 threads the bilayer. Residues leucine 239–leucine 259 constitute an intramembrane region (pore-forming). Residues isoleucine 263–valine 283 traverse the membrane as a helical segment. A calmodulin-binding region spans residues alanine 284–alanine 345. Phosphohistidine is present on histidine 356.

It belongs to the potassium channel KCNN family. KCa3.1/KCNN4 subfamily. As to quaternary structure, homodimer. Homotetramer. Heterotetramer of potassium channel proteins. Interacts with MTMR6; this interaction leads to selective dephosphorylation of PI(3)P in a lipid microdomain adjacent to KCNN4, resulting in a decrease of intermediate conductance calcium-activated potassium channel activity. Interacts (via the C-tail domain) with CALM1; the calmodulin binding is constitutive, does not require calcium and mediates calcium-dependent gating and four calmodulin molecules bind to one channel tetramer. In terms of processing, phosphorylation at His-356 by NDKB activates the intermediate conductance calcium-activated potassium channel activity, and conversely it's dephosphorylation by PHPT1 inhibits this activity.

The protein resides in the cell membrane. Its subcellular location is the cell projection. It is found in the ruffle membrane. The enzyme catalyses K(+)(in) = K(+)(out). Intermediate conductance calcium-activated potassium channel that mediates the voltage-independent transmembrane transfer of potassium across the cell membrane through a constitutive interaction with calmodulin which binds the intracellular calcium allowing its opening. The current is characterized by a voltage-independent activation, an intracellular calcium concentration increase-dependent activation and a single-channel conductance of about 25 picosiemens. Also presents an inwardly rectifying current, thus reducing its already small outward conductance of potassium ions, which is particularly the case when the membrane potential displays positive values, above + 20 mV. Controls calcium influx during vascular contractility by being responsible of membrane hyperpolarization induced by vasoactive factors in proliferative vascular smooth muscle cell types. Following calcium influx, the consecutive activation of KCNN4 channel leads to a hyperpolarization of the cell membrane potential and hence an increase of the electrical driving force for further calcium influx promoting sustained calcium entry in response to stimulation with chemotactic peptides. Required for maximal calcium influx and proliferation during the reactivation of naive T-cells. Plays a role in the late stages of EGF-induced macropinocytosis through activation by PI(3)P. This chain is Intermediate conductance calcium-activated potassium channel protein 4, found in Rattus norvegicus (Rat).